We begin with the raw amino-acid sequence, 432 residues long: Adenylosuccinate synthetase (432 aa).

Residues 13–19 and 41–43 each bind GTP; these read GDEGKGK and GHT. Aspartate 14 acts as the Proton acceptor in catalysis. Positions 14 and 41 each coordinate Mg(2+). IMP-binding positions include 14-17, 39-42, threonine 130, arginine 144, glutamine 225, threonine 240, and arginine 304; these read DEGK and NAGH. The active-site Proton donor is histidine 42. 300–306 provides a ligand contact to substrate; that stretch reads ATTGRRR. GTP-binding positions include arginine 306, 332–334, and 415–417; these read KLD and STG.

The protein belongs to the adenylosuccinate synthetase family. Homodimer. The cofactor is Mg(2+).

The protein localises to the cytoplasm. It catalyses the reaction IMP + L-aspartate + GTP = N(6)-(1,2-dicarboxyethyl)-AMP + GDP + phosphate + 2 H(+). It participates in purine metabolism; AMP biosynthesis via de novo pathway; AMP from IMP: step 1/2. Functionally, plays an important role in the de novo pathway of purine nucleotide biosynthesis. Catalyzes the first committed step in the biosynthesis of AMP from IMP. The sequence is that of Adenylosuccinate synthetase from Baumannia cicadellinicola subsp. Homalodisca coagulata.